The chain runs to 836 residues: Sucrose synthase 5 (836 aa).

The GT-B glycosyltransferase stretch occupies residues 270–748 (RIFNVVIFSV…GLQRINECYT (479 aa)). Residues 805 to 836 (PPPLPPKPLVKPSASKGSKRTQPRLSFRLFGA) are disordered.

This sequence belongs to the glycosyltransferase 1 family. Plant sucrose synthase subfamily. Detected in the whole plant but more precisely confined to the vasculature in cotyledons, leaves, petals, anthers and roots. Also detected in developing siliques, young immature rosette and cauline leaves.

It localises to the secreted. It is found in the cell wall. The enzyme catalyses an NDP-alpha-D-glucose + D-fructose = a ribonucleoside 5'-diphosphate + sucrose + H(+). In terms of biological role, sucrose-cleaving enzyme that provides UDP-glucose and fructose for various metabolic pathways. Functions in callose synthesis at the site of phloem sieve elements. This chain is Sucrose synthase 5 (SUS5), found in Arabidopsis thaliana (Mouse-ear cress).